A 289-amino-acid polypeptide reads, in one-letter code: ATP phosphoribosyltransferase (289 aa).

It belongs to the ATP phosphoribosyltransferase family. Long subfamily. Mg(2+) serves as cofactor.

The protein localises to the cytoplasm. The enzyme catalyses 1-(5-phospho-beta-D-ribosyl)-ATP + diphosphate = 5-phospho-alpha-D-ribose 1-diphosphate + ATP. The protein operates within amino-acid biosynthesis; L-histidine biosynthesis; L-histidine from 5-phospho-alpha-D-ribose 1-diphosphate: step 1/9. Feedback inhibited by histidine. Functionally, catalyzes the condensation of ATP and 5-phosphoribose 1-diphosphate to form N'-(5'-phosphoribosyl)-ATP (PR-ATP). Has a crucial role in the pathway because the rate of histidine biosynthesis seems to be controlled primarily by regulation of HisG enzymatic activity. The sequence is that of ATP phosphoribosyltransferase from Methanosarcina mazei (strain ATCC BAA-159 / DSM 3647 / Goe1 / Go1 / JCM 11833 / OCM 88) (Methanosarcina frisia).